The sequence spans 261 residues: Aquaporin-8 (261 aa).

At 1-36 (MSGEQTPMCSMDLPEVKVKTSMAGRCRVFWYEQYVQ) the chain is on the cytoplasmic side. Residues 37–57 (PCIVELVGSALFIFIGCLSVI) traverse the membrane as a helical segment. Cys-53 is subject to Cysteine persulfide. At Cys-53 the chain carries Cysteine sulfenic acid (-SOH). The Extracellular portion of the chain corresponds to 58–84 (ENSPNTGLLQPALAHGLALGLIIATLG). A helical transmembrane segment spans residues 85-105 (NISGGHFNPAVSLAVTVIGGL). Residues 92-94 (NPA) carry the NPA 1 motif. At 106-107 (KT) the chain is on the cytoplasmic side. A helical transmembrane segment spans residues 108-128 (MLLIPYWISQLFGGLIGAALA). Topologically, residues 129–156 (KVVSPEERFWNASGAAFAIVQEQEQVAE) are extracellular. N-linked (GlcNAc...) asparagine glycosylation is present at Asn-139. Residues 157–177 (ALGIEIILTMLLVLAVCMGAV) traverse the membrane as a helical segment. Over 178-183 (NEKTMG) the chain is Cytoplasmic. The chain crosses the membrane as a helical span at residues 184–204 (PLAPFSIGFSVIVDILAGGSI). At 205–228 (SGACMNPARAFGPAVMAGYWDFHW) the chain is on the extracellular side. The NPA 2 signature appears at 210-212 (NPA). The chain crosses the membrane as a helical span at residues 229-249 (IYWLGPLLAGLFVGLLIRLLI). At 250 to 261 (GDEKTRLILKSR) the chain is on the cytoplasmic side.

The protein belongs to the MIP/aquaporin (TC 1.A.8) family. Sulfenylation at Cys-53(C53-SOH) when hydrogen peroxide flows through the AQP8 channel, making it susceptible to hydrogen sulfide produced by CBS. In terms of processing, persulfidation at Cys-53 is required to gate AQP8 channel; under stress condition, hydrogen peroxide accumulates in the cell leading to CBS activation that produces hydrogen sulfide inducing persulfidation of oxidized Cys-53 (C53-SOH). Post-translationally, N-glycosylated. In terms of tissue distribution, expressed in placenta. Highly expressed in the epithelial layer of gall-bladders. Expressed in heart, kidney, submandibular gland, liver, small intestine, colon, testes, and epididymis. In testes, expressed in spermatogenic cells.

The protein localises to the cell membrane. Its subcellular location is the mitochondrion inner membrane. The protein resides in the apical cell membrane. It localises to the basolateral cell membrane. It is found in the smooth endoplasmic reticulum membrane. The catalysed reaction is H2O(in) = H2O(out). It carries out the reaction urea(in) = urea(out). It catalyses the reaction NH4(+)(in) = NH4(+)(out). The enzyme catalyses H2O2(out) = H2O2(in). The catalysed reaction is formamide(out) = formamide(in). It carries out the reaction methylamine(out) = methylamine(in). Its activity is regulated as follows. Reversibly gated by a two-step sulfenylation-persulfidation process in cells undergoing diverse stresses. Channel that allows the facilitated permeation of water and uncharged molecules, such as hydrogen peroxide and the neutral form of ammonia (NH3), through cellular membranes such as plasma membrane, inner mitochondrial membrane and endoplasmic reticulum membrane of several tissues. The transport of ammonia neutral form induces a parallel transport of proton, at alkaline pH when the concentration of ammonia is high. However, it is unclear whether the transport of proton takes place via the aquaporin or via an endogenous pathway. Also, may transport ammonia analogs such as formamide and methylamine, a transport favourited at basic pH due to the increase of unprotonated (neutral) form, which is expected to favor diffusion. In vitro, may be also permeable to urea but not to glycerol. Does not transport urea or glycerol. The water transport mechanism is mercury- and copper-sensitive and passive in response to osmotic driving forces. At the canicular plasma membrane, mediates the osmotic transport of water toward the bile canaliculus and facilitates the cAMP-induced bile canalicular water secretion, a process involved in bile formation. In addition, mediates the hydrogen peroxide release from hepatocyte mitochondria that modulates the SREBF2-mediated cholesterol synthesis and facilitates the mitochondrial ammonia uptake which is metabolized into urea, mainly under glucagon stimulation. In B cells, transports the CYBB-generated hydrogen peroxide from the external leaflet of the plasma membrane to the cytosol to promote B cell activation and differentiation for signal amplification. In the small intestine and colon system, mediates water transport through mitochondria and apical membrane of epithelial cells. May play an important role in the adaptive response of proximal tubule cells to acidosis possibly facilitating mitochondrial ammonia transport. The protein is Aquaporin-8 of Mus musculus (Mouse).